A 274-amino-acid polypeptide reads, in one-letter code: Acetyl-coenzyme A carboxylase carboxyl transferase subunit beta (274 aa).

The 257-residue stretch at Ile18–Phe274 folds into the CoA carboxyltransferase N-terminal domain. Positions 22, 25, 41, and 44 each coordinate Zn(2+). The segment at Cys22 to Cys44 adopts a C4-type zinc-finger fold.

Belongs to the AccD/PCCB family. Acetyl-CoA carboxylase is a heterohexamer composed of biotin carboxyl carrier protein (AccB), biotin carboxylase (AccC) and two subunits each of ACCase subunit alpha (AccA) and ACCase subunit beta (AccD). Requires Zn(2+) as cofactor.

It is found in the cytoplasm. It catalyses the reaction N(6)-carboxybiotinyl-L-lysyl-[protein] + acetyl-CoA = N(6)-biotinyl-L-lysyl-[protein] + malonyl-CoA. It participates in lipid metabolism; malonyl-CoA biosynthesis; malonyl-CoA from acetyl-CoA: step 1/1. In terms of biological role, component of the acetyl coenzyme A carboxylase (ACC) complex. Biotin carboxylase (BC) catalyzes the carboxylation of biotin on its carrier protein (BCCP) and then the CO(2) group is transferred by the transcarboxylase to acetyl-CoA to form malonyl-CoA. The sequence is that of Acetyl-coenzyme A carboxylase carboxyl transferase subunit beta from Endomicrobium trichonymphae.